The sequence spans 488 residues: Ribulose bisphosphate carboxylase large chain (488 aa).

Positions 127 and 177 each coordinate substrate. Residue Lys-179 is the Proton acceptor of the active site. Lys-181 serves as a coordination point for substrate. Mg(2+) is bound by residues Lys-205, Asp-207, and Glu-208. N6-carboxylysine is present on Lys-205. The active-site Proton acceptor is the His-297. Substrate contacts are provided by Arg-298, His-330, and Ser-382.

It belongs to the RuBisCO large chain family. Type I subfamily. As to quaternary structure, heterohexadecamer of 8 large chains and 8 small chains. The cofactor is Mg(2+).

Its subcellular location is the plastid. The protein localises to the chloroplast. It carries out the reaction 2 (2R)-3-phosphoglycerate + 2 H(+) = D-ribulose 1,5-bisphosphate + CO2 + H2O. The catalysed reaction is D-ribulose 1,5-bisphosphate + O2 = 2-phosphoglycolate + (2R)-3-phosphoglycerate + 2 H(+). RuBisCO catalyzes two reactions: the carboxylation of D-ribulose 1,5-bisphosphate, the primary event in carbon dioxide fixation, as well as the oxidative fragmentation of the pentose substrate in the photorespiration process. Both reactions occur simultaneously and in competition at the same active site. In Pyropia suborbiculata (Red alga), this protein is Ribulose bisphosphate carboxylase large chain.